A 241-amino-acid chain; its full sequence is Small ribosomal subunit protein uS3 (241 aa).

One can recognise a KH type-2 domain in the interval I39–R107. A disordered region spans residues A214 to A241.

This sequence belongs to the universal ribosomal protein uS3 family. As to quaternary structure, part of the 30S ribosomal subunit. Forms a tight complex with proteins S10 and S14.

Its function is as follows. Binds the lower part of the 30S subunit head. Binds mRNA in the 70S ribosome, positioning it for translation. The protein is Small ribosomal subunit protein uS3 of Mesorhizobium japonicum (strain LMG 29417 / CECT 9101 / MAFF 303099) (Mesorhizobium loti (strain MAFF 303099)).